The following is a 417-amino-acid chain: UPF0761 membrane protein Daci_4966 (417 aa).

The next 6 helical transmembrane spans lie at Val-49 to Phe-69, Gln-106 to Ile-126, Val-146 to Leu-166, Phe-187 to Tyr-207, Ala-235 to Thr-255, and Leu-256 to Val-276.

Belongs to the UPF0761 family.

Its subcellular location is the cell inner membrane. This Delftia acidovorans (strain DSM 14801 / SPH-1) protein is UPF0761 membrane protein Daci_4966.